The primary structure comprises 521 residues: Potassium/proton antiporter CemA (521 aa).

A run of 5 helical transmembrane segments spans residues 68–88 (FVFIIYWSVLECKTSIYLLNI), 294–314 (ALASLQYLGCLILIPWGISFP), 399–419 (ILHLLTDIIYFAIPSASFISG), 446–466 (ILLLTDSCIGFHSPHGWEILI), and 481–501 (IISCFVSTFPVISDTVFKYWI).

It belongs to the CemA family.

It is found in the plastid. The protein localises to the chloroplast inner membrane. The catalysed reaction is K(+)(in) + H(+)(out) = K(+)(out) + H(+)(in). Contributes to K(+)/H(+) antiport activity by supporting proton efflux to control proton extrusion and homeostasis in chloroplasts in a light-dependent manner to modulate photosynthesis. Prevents excessive induction of non-photochemical quenching (NPQ) under continuous-light conditions. Indirectly promotes efficient inorganic carbon uptake into chloroplasts. This chain is Potassium/proton antiporter CemA, found in Huperzia lucidula (Shining clubmoss).